We begin with the raw amino-acid sequence, 378 residues long: Succinyl-diaminopimelate desuccinylase (378 aa).

Position 67 (His67) interacts with Zn(2+). The active site involves Asp69. Asp100 contacts Zn(2+). The Proton acceptor role is filled by Glu134. 3 residues coordinate Zn(2+): Glu135, Glu163, and His349.

It belongs to the peptidase M20A family. DapE subfamily. As to quaternary structure, homodimer. Zn(2+) is required as a cofactor. It depends on Co(2+) as a cofactor.

The catalysed reaction is N-succinyl-(2S,6S)-2,6-diaminopimelate + H2O = (2S,6S)-2,6-diaminopimelate + succinate. It functions in the pathway amino-acid biosynthesis; L-lysine biosynthesis via DAP pathway; LL-2,6-diaminopimelate from (S)-tetrahydrodipicolinate (succinylase route): step 3/3. Functionally, catalyzes the hydrolysis of N-succinyl-L,L-diaminopimelic acid (SDAP), forming succinate and LL-2,6-diaminopimelate (DAP), an intermediate involved in the bacterial biosynthesis of lysine and meso-diaminopimelic acid, an essential component of bacterial cell walls. The chain is Succinyl-diaminopimelate desuccinylase from Nitrosospira multiformis (strain ATCC 25196 / NCIMB 11849 / C 71).